The chain runs to 209 residues: GTP cyclohydrolase 1 (209 aa).

The Zn(2+) site is built by cysteine 100, histidine 103, and cysteine 171.

This sequence belongs to the GTP cyclohydrolase I family. As to quaternary structure, toroid-shaped homodecamer, composed of two pentamers of five dimers.

It catalyses the reaction GTP + H2O = 7,8-dihydroneopterin 3'-triphosphate + formate + H(+). It functions in the pathway cofactor biosynthesis; 7,8-dihydroneopterin triphosphate biosynthesis; 7,8-dihydroneopterin triphosphate from GTP: step 1/1. The sequence is that of GTP cyclohydrolase 1 from Ralstonia nicotianae (strain ATCC BAA-1114 / GMI1000) (Ralstonia solanacearum).